We begin with the raw amino-acid sequence, 434 residues long: Adenylosuccinate synthetase (434 aa).

Residues 12-18 (GDEGKGK) and 40-42 (GHT) each bind GTP. Residue aspartate 13 is the Proton acceptor of the active site. 2 residues coordinate Mg(2+): aspartate 13 and glycine 40. Residues 13–16 (DEGK), 38–41 (NAGH), threonine 129, arginine 143, glutamine 224, threonine 239, and arginine 303 contribute to the IMP site. Residue histidine 41 is the Proton donor of the active site. 299–305 (AVTGRPR) is a binding site for substrate. Residues arginine 305, 331–333 (KLD), and 413–415 (STG) each bind GTP.

The protein belongs to the adenylosuccinate synthetase family. Homodimer. Mg(2+) serves as cofactor.

The protein localises to the cytoplasm. It catalyses the reaction IMP + L-aspartate + GTP = N(6)-(1,2-dicarboxyethyl)-AMP + GDP + phosphate + 2 H(+). It functions in the pathway purine metabolism; AMP biosynthesis via de novo pathway; AMP from IMP: step 1/2. Its function is as follows. Plays an important role in the de novo pathway of purine nucleotide biosynthesis. Catalyzes the first committed step in the biosynthesis of AMP from IMP. The sequence is that of Adenylosuccinate synthetase from Solibacter usitatus (strain Ellin6076).